We begin with the raw amino-acid sequence, 366 residues long: sn-glycerol-3-phosphate import ATP-binding protein UgpC (366 aa).

Residues 4–235 form the ABC transporter domain; it reads VTLRNVRKTY…PASTFVASFI (232 aa). 37–44 contacts ATP; it reads GPSGCGKS.

Belongs to the ABC transporter superfamily. sn-glycerol-3-phosphate importer (TC 3.A.1.1.3) family. As to quaternary structure, the complex is composed of two ATP-binding proteins (UgpC), two transmembrane proteins (UgpA and UgpE) and a solute-binding protein (UgpB).

The protein localises to the cell inner membrane. It carries out the reaction sn-glycerol 3-phosphate(out) + ATP + H2O = sn-glycerol 3-phosphate(in) + ADP + phosphate + H(+). Part of the ABC transporter complex UgpBAEC involved in sn-glycerol-3-phosphate (G3P) import. Responsible for energy coupling to the transport system. This chain is sn-glycerol-3-phosphate import ATP-binding protein UgpC, found in Rhodopseudomonas palustris (strain BisB18).